The primary structure comprises 109 residues: MRLAPIKLVVNYYVLFGKSLNQEKENLIEMKGVITQCLSNGMFRVKLENGFKVIAHISGKIRRNFIRILLGDSVIVELSPYDLTRGRIIYRLKPTNSSTETLRFNTNLK.

The S1-like domain maps to 18 to 93 (KSLNQEKENL…TRGRIIYRLK (76 aa)).

This sequence belongs to the IF-1 family. Component of the 30S ribosomal translation pre-initiation complex which assembles on the 30S ribosome in the order IF-2 and IF-3, IF-1 and N-formylmethionyl-tRNA(fMet); mRNA recruitment can occur at any time during PIC assembly.

It localises to the plastid. The protein resides in the chloroplast. In terms of biological role, one of the essential components for the initiation of protein synthesis. Stabilizes the binding of IF-2 and IF-3 on the 30S subunit to which N-formylmethionyl-tRNA(fMet) subsequently binds. Helps modulate mRNA selection, yielding the 30S pre-initiation complex (PIC). Upon addition of the 50S ribosomal subunit IF-1, IF-2 and IF-3 are released leaving the mature 70S translation initiation complex. The polypeptide is Translation initiation factor IF-1, chloroplastic (Tupiella akineta (Green alga)).